We begin with the raw amino-acid sequence, 88 residues long: Small ribosomal subunit protein uS17 (88 aa).

The protein belongs to the universal ribosomal protein uS17 family. Part of the 30S ribosomal subunit.

Functionally, one of the primary rRNA binding proteins, it binds specifically to the 5'-end of 16S ribosomal RNA. The polypeptide is Small ribosomal subunit protein uS17 (Pseudomonas entomophila (strain L48)).